A 545-amino-acid chain; its full sequence is Hsk1-interacting molecule 1 (545 aa).

The DBF4-type zinc-finger motif lies at 492–541; sequence VDAKPGYCENCREKFDNFESHIRSSRHRRFAENNDNFKDLDELFALVQRP. Zn(2+) contacts are provided by cysteine 499, cysteine 502, histidine 512, and histidine 518.

Associates with hsk1. Interacts with mcm10. In terms of processing, hyperphosphorylated at the G1/S and S-phases of the cell cycle.

The protein localises to the nucleus. Its function is as follows. Activates hsk1 kinase and is essential for G1/S transition. Has a role in S-phase checkpoint control induced by replication fork blocks after nucleotide deprivation and DNA damage. In Schizosaccharomyces pombe (strain 972 / ATCC 24843) (Fission yeast), this protein is Hsk1-interacting molecule 1 (him1).